The primary structure comprises 568 residues: Kelch-like protein 12 (568 aa).

The region spanning 33–100 (CDVTLRVEQK…VYTETVHVTV (68 aa)) is the BTB domain. The 102-residue stretch at 135–236 (CLGIRDFAET…LTPRYITDVI (102 aa)) folds into the BACK domain. Kelch repeat units lie at residues 282–329 (VLLV…SLHD), 331–379 (IYVI…TLGD), 380–426 (MIYV…VASG), 427–473 (VIYC…LLND), 475–520 (IYVV…VLRG), and 522–567 (LYAI…VLRE). The segment at 405-568 (QWSMLGDMQT…DAGVCVLREK (164 aa)) is interaction with DVL3.

In terms of assembly, component of the BCR(KLHL12) E3 ubiquitin ligase complex, at least composed of CUL3 and KLHL12 and RBX1. This complex interacts with DVL3 upon activation of the Wnt signaling pathway by WNT3A. Interacts with DRD4, KLHL2 and SEC31A. Interacts with PEF1 and PDCD6/ALG-2; interaction takes place in response to cytosolic calcium increase and leads to bridge together the BCR(KLHL12) complex and SEC31 (SEC31A or SEC31B). Ubiquitinated by the SCF(FBXL17) complex, leading to its degradation by the proteasome: ubiquitination by the SCF(FBXL17) complex takes place when aberrant BTB domain dimers are formed. Ubiquitously expressed. Highly expressed in testis and at lower levels in the submandibular salivary gland.

Its subcellular location is the cytoplasmic vesicle. It localises to the COPII-coated vesicle. Its pathway is protein modification; protein ubiquitination. Functionally, substrate-specific adapter of a BCR (BTB-CUL3-RBX1) E3 ubiquitin ligase complex that acts as a negative regulator of Wnt signaling pathway and ER-Golgi transport. The BCR(KLHL12) complex is involved in ER-Golgi transport by regulating the size of COPII coats, thereby playing a key role in collagen export, which is required for embryonic stem (ES) cells division: BCR(KLHL12) acts by mediating monoubiquitination of SEC31 (SEC31A or SEC31B). The BCR(KLHL12) complex is also involved in neural crest specification: in response to cytosolic calcium increase, interacts with the heterodimer formed with PEF1 and PDCD6/ALG-2, leading to bridge together the BCR(KLHL12) complex and SEC31 (SEC31A or SEC31B), promoting monoubiquitination of SEC31 and subsequent collagen export. As part of the BCR(KLHL12) complex, also acts as a negative regulator of the Wnt signaling pathway by mediating ubiquitination and subsequent proteolysis of DVL3. The BCR(KLHL12) complex also mediates polyubiquitination of DRD4 and PEF1, without leading to degradation of these proteins. The polypeptide is Kelch-like protein 12 (KLHL12) (Homo sapiens (Human)).